Here is a 403-residue protein sequence, read N- to C-terminus: MDLRDRFTEMREMDLQVQNAMDQLEQRASEFFMNAKKNKPEWREEQMASIKKDYYKALEDADEKVQLANQIYDLVDRHLRKLDQELAKFKMELEADNAGITEILERRSLELDTPSQPVNNHHAHSHTPVEKRKYNPTSHHTTTDHIPEKKFKSEALLSTLTSDASKENTLGCRNNNSTASSNNAYNVNSSQPLGSYNIGSLSSGTGAGAITMAAAQAVQATAQMREGRRTSSLKASYEAFKNNDFQLGKEFSMARETVGYSSSSALMTTLTQNASSSAADSRSGRKSKNNNKSSSQQSSSSSSSSSLSSCSSSSTVVQEISQQTTVVPESDSNSQVDWTYDPNEPRYCICNQVSYGEMVGCDNQDCPIEWFHYGCVGLTEAPKGKWYCPQCTAAMKRRGSRHK.

Positions 112 to 149 (DTPSQPVNNHHAHSHTPVEKRKYNPTSHHTTTDHIPEK) are disordered. Glycyl lysine isopeptide (Lys-Gly) (interchain with G-Cter in SUMO2) cross-links involve residues lysine 133, lysine 150, and lysine 152. N6-acetyllysine is present on lysine 166. A Glycyl lysine isopeptide (Lys-Gly) (interchain with G-Cter in SUMO2) cross-link involves residue lysine 241. N6-acetyllysine is present on lysine 249. Residues 271-310 (TQNASSSAADSRSGRKSKNNNKSSSQQSSSSSSSSSLSSC) are disordered. Positions 290–310 (NNKSSSQQSSSSSSSSSLSSC) are enriched in low complexity. The segment at 345–394 (PRYCICNQVSYGEMVGCDNQDCPIEWFHYGCVGLTEAPKGKWYCPQCTAA) adopts a PHD-type zinc-finger fold. Zn(2+) contacts are provided by cysteine 348, cysteine 350, cysteine 361, cysteine 366, histidine 372, cysteine 375, cysteine 388, and cysteine 391.

It belongs to the ING family. As to quaternary structure, interacts with H3K4me3 and to a lesser extent with H3K4me2. Component of the NuA4 histone acetyltransferase complex which contains the catalytic subunit KAT5/TIP60 and the subunits EP400, TRRAP/PAF400, BRD8/SMAP, EPC1, DMAP1/DNMAP1, RUVBL1/TIP49, RUVBL2, ING3, actin, ACTL6A/BAF53A, MORF4L1/MRG15, MORF4L2/MRGX, MRGBP, YEATS4/GAS41, VPS72/YL1 and MEAF6. The NuA4 complex interacts with MYC. HTATTIP/TIP60, EPC1, and ING3 together constitute a minimal HAT complex termed Piccolo NuA4. Component of a SWR1-like complex.

The protein resides in the nucleus. Functionally, component of the NuA4 histone acetyltransferase (HAT) complex which is involved in transcriptional activation of select genes principally by acetylation of nucleosomal histones H4 and H2A. This modification may both alter nucleosome - DNA interactions and promote interaction of the modified histones with other proteins which positively regulate transcription. This complex may be required for the activation of transcriptional programs associated with oncogene and proto-oncogene mediated growth induction, tumor suppressor mediated growth arrest and replicative senescence, apoptosis, and DNA repair. NuA4 may also play a direct role in DNA repair when directly recruited to sites of DNA damage. Component of a SWR1-like complex that specifically mediates the removal of histone H2A.Z/H2AZ1 from the nucleosome. In Pongo abelii (Sumatran orangutan), this protein is Inhibitor of growth protein 3 (ING3).